The primary structure comprises 198 residues: CASP-like protein 1U1 (198 aa).

Topologically, residues 1-30 (MSDTPVVVIPRKGYVDGHHGYHHSYHSGLN) are cytoplasmic. Residues 31-51 (LLLRLLQAFATAAAVIVMLLA) form a helical membrane-spanning segment. The Extracellular portion of the chain corresponds to 52–73 (TQTEFTRYGEVRGRWRDYPAYK). A helical membrane pass occupies residues 74–94 (WFIIANAVVFVYALLATLVAC). Residues 95 to 117 (CALIARRGPLSYSPSAWLTFLLD) lie on the Cytoplasmic side of the membrane. Residues 118-138 (FVAASALMSAASAALAVALIA) form a helical membrane-spanning segment. Residues 139–165 (RNGQNLQGQHYWPTFCNYVTRFCDYAQ) are Extracellular-facing. Residues 166 to 186 (GAIIASFCGFGLLALSTLLAA) form a helical membrane-spanning segment. The Cytoplasmic segment spans residues 187-198 (SALHHLAWHRLH).

This sequence belongs to the Casparian strip membrane proteins (CASP) family. In terms of assembly, homodimer and heterodimers.

It is found in the cell membrane. This is CASP-like protein 1U1 from Physcomitrium patens (Spreading-leaved earth moss).